Here is a 223-residue protein sequence, read N- to C-terminus: Deoxyribose-phosphate aldolase 1 (223 aa).

The Proton donor/acceptor role is filled by D91. K154 acts as the Schiff-base intermediate with acetaldehyde in catalysis. Catalysis depends on K183, which acts as the Proton donor/acceptor.

Belongs to the DeoC/FbaB aldolase family. DeoC type 1 subfamily.

It is found in the cytoplasm. The enzyme catalyses 2-deoxy-D-ribose 5-phosphate = D-glyceraldehyde 3-phosphate + acetaldehyde. The protein operates within carbohydrate degradation; 2-deoxy-D-ribose 1-phosphate degradation; D-glyceraldehyde 3-phosphate and acetaldehyde from 2-deoxy-alpha-D-ribose 1-phosphate: step 2/2. In terms of biological role, catalyzes a reversible aldol reaction between acetaldehyde and D-glyceraldehyde 3-phosphate to generate 2-deoxy-D-ribose 5-phosphate. The polypeptide is Deoxyribose-phosphate aldolase 1 (Bacillus licheniformis (strain ATCC 14580 / DSM 13 / JCM 2505 / CCUG 7422 / NBRC 12200 / NCIMB 9375 / NCTC 10341 / NRRL NRS-1264 / Gibson 46)).